Consider the following 661-residue polypeptide: UvrABC system protein B (661 aa).

Residues 25–414 (AGLNSKKRSQ…DTVVELIIRP (390 aa)) form the Helicase ATP-binding domain. 38 to 45 (GITGSGKT) provides a ligand contact to ATP. The Beta-hairpin signature appears at 91-114 (YYDYYQPEAYIARTDTFIEKDSSI). Positions 430–592 (QVEDLIGEIQ…IIPKTINRAI (163 aa)) constitute a Helicase C-terminal domain. The region spanning 621-656 (KAHIEKLKKDMLKAASNLEFEQAAKLRDQLKTLEEA) is the UVR domain.

It belongs to the UvrB family. Forms a heterotetramer with UvrA during the search for lesions. Interacts with UvrC in an incision complex.

The protein resides in the cytoplasm. The UvrABC repair system catalyzes the recognition and processing of DNA lesions. A damage recognition complex composed of 2 UvrA and 2 UvrB subunits scans DNA for abnormalities. Upon binding of the UvrA(2)B(2) complex to a putative damaged site, the DNA wraps around one UvrB monomer. DNA wrap is dependent on ATP binding by UvrB and probably causes local melting of the DNA helix, facilitating insertion of UvrB beta-hairpin between the DNA strands. Then UvrB probes one DNA strand for the presence of a lesion. If a lesion is found the UvrA subunits dissociate and the UvrB-DNA preincision complex is formed. This complex is subsequently bound by UvrC and the second UvrB is released. If no lesion is found, the DNA wraps around the other UvrB subunit that will check the other stand for damage. This is UvrABC system protein B from Rickettsia felis (strain ATCC VR-1525 / URRWXCal2) (Rickettsia azadi).